The sequence spans 215 residues: Cytochrome c biogenesis ATP-binding export protein CcmA (215 aa).

Residues 3-211 (LTAEILAARR…KMTGFAGVDN (209 aa)) form the ABC transporter domain. Residue 35-42 (GKNGSGKS) participates in ATP binding.

This sequence belongs to the ABC transporter superfamily. CcmA exporter (TC 3.A.1.107) family. In terms of assembly, the complex is composed of two ATP-binding proteins (CcmA) and two transmembrane proteins (CcmB).

The protein localises to the cell inner membrane. The enzyme catalyses heme b(in) + ATP + H2O = heme b(out) + ADP + phosphate + H(+). Part of the ABC transporter complex CcmAB involved in the biogenesis of c-type cytochromes; once thought to export heme, this seems not to be the case, but its exact role is uncertain. Responsible for energy coupling to the transport system. This is Cytochrome c biogenesis ATP-binding export protein CcmA from Rhizobium johnstonii (strain DSM 114642 / LMG 32736 / 3841) (Rhizobium leguminosarum bv. viciae).